An 874-amino-acid polypeptide reads, in one-letter code: DNA mismatch repair protein MutS (874 aa).

630–637 (GPNMAGKS) contributes to the ATP binding site.

The protein belongs to the DNA mismatch repair MutS family.

This protein is involved in the repair of mismatches in DNA. It is possible that it carries out the mismatch recognition step. This protein has a weak ATPase activity. This is DNA mismatch repair protein MutS from Chlorobium phaeovibrioides (strain DSM 265 / 1930) (Prosthecochloris vibrioformis (strain DSM 265)).